The following is a 153-amino-acid chain: Aspartate carbamoyltransferase regulatory chain (153 aa).

Zn(2+)-binding residues include Cys110, Cys115, Cys138, and Cys141.

The protein belongs to the PyrI family. In terms of assembly, contains catalytic and regulatory chains. Zn(2+) is required as a cofactor.

Its function is as follows. Involved in allosteric regulation of aspartate carbamoyltransferase. The chain is Aspartate carbamoyltransferase regulatory chain from Bacteroides thetaiotaomicron (strain ATCC 29148 / DSM 2079 / JCM 5827 / CCUG 10774 / NCTC 10582 / VPI-5482 / E50).